The following is a 406-amino-acid chain: Putative permease Rv2963 (406 aa).

A run of 9 helical transmembrane segments spans residues 30–50, 67–87, 111–131, 132–152, 208–228, 246–266, 278–298, 312–332, and 361–381; these read WEILWALILGFALSAVVQAVV, LVIATGLGAASSSCSYAAVAL, LVVELGIILALLMGWQFTAAE, FVGGPIMILVLAVLFRLFVGA, LAILRDLILGLLIAGAIAAWV, AVWGPIIGPIVAIVSFVCSIG, GISFGGVIAFIFADLLILPIL, VLLGTFYASMVVAGYLIELLF, and VIFLVIAAALVVRFITSGGLP.

It belongs to the UPF0718 family.

Its subcellular location is the cell membrane. In Mycobacterium tuberculosis (strain ATCC 25618 / H37Rv), this protein is Putative permease Rv2963.